A 145-amino-acid chain; its full sequence is Large ribosomal subunit protein uL15 (145 aa).

Positions 1 to 54 (MKLNELKYTPGSKKEATRVGRGMASGKGKTATRGHKGQNSRSGGGVRPGFEGGQ) are disordered. Positions 42-52 (SGGGVRPGFEG) are enriched in gly residues.

It belongs to the universal ribosomal protein uL15 family. In terms of assembly, part of the 50S ribosomal subunit.

Functionally, binds to the 23S rRNA. The protein is Large ribosomal subunit protein uL15 of Mycoplasma capricolum subsp. capricolum (strain California kid / ATCC 27343 / NCTC 10154).